The sequence spans 357 residues: Putative DENN domain-containing protein 10 B (357 aa).

One can recognise a uDENN domain in the interval 1–140 (MAAAELADTQ…TKGICQSEEN (140 aa)). Positions 159-299 (IKDIVSQFGM…PEKSESQVIQ (141 aa)) constitute a cDENN domain. One can recognise a dDENN domain in the interval 301–357 (IALKTREIFTNLAPFSEVSADGEKRVLNLEALKQKRFPPATENFLYHLAAAEQMLKI).

The protein belongs to the DENND10 family.

It is found in the late endosome. Functionally, may be a guanine nucleotide exchange factor (GEF). In Homo sapiens (Human), this protein is Putative DENN domain-containing protein 10 B.